Here is a 465-residue protein sequence, read N- to C-terminus: Glutamate--tRNA ligase (465 aa).

The short motif at 11-21 (PSPTGFIHLGN) is the 'HIGH' region element. Over residues 120–131 (KPRYDGTWRPEP) the composition is skewed to basic and acidic residues. The disordered stretch occupies residues 120–139 (KPRYDGTWRPEPGKVLPTPP). A 'KMSKS' region motif is present at residues 243–247 (KMSKR). Lys-246 contacts ATP.

This sequence belongs to the class-I aminoacyl-tRNA synthetase family. Glutamate--tRNA ligase type 1 subfamily. As to quaternary structure, monomer.

The protein resides in the cytoplasm. The enzyme catalyses tRNA(Glu) + L-glutamate + ATP = L-glutamyl-tRNA(Glu) + AMP + diphosphate. Catalyzes the attachment of glutamate to tRNA(Glu) in a two-step reaction: glutamate is first activated by ATP to form Glu-AMP and then transferred to the acceptor end of tRNA(Glu). This Ralstonia nicotianae (strain ATCC BAA-1114 / GMI1000) (Ralstonia solanacearum) protein is Glutamate--tRNA ligase.